The primary structure comprises 213 residues: Orotate phosphoribosyltransferase (213 aa).

Lys26 is a binding site for 5-phospho-alpha-D-ribose 1-diphosphate. An orotate-binding site is contributed by 34 to 35; the sequence is FF. Residues 72 to 73, Arg99, Lys100, Lys103, His105, and 124 to 132 each bind 5-phospho-alpha-D-ribose 1-diphosphate; these read YK and DDVITAGTA. Residues Thr128 and Arg156 each contribute to the orotate site.

This sequence belongs to the purine/pyrimidine phosphoribosyltransferase family. PyrE subfamily. In terms of assembly, homodimer. Mg(2+) serves as cofactor.

The enzyme catalyses orotidine 5'-phosphate + diphosphate = orotate + 5-phospho-alpha-D-ribose 1-diphosphate. It functions in the pathway pyrimidine metabolism; UMP biosynthesis via de novo pathway; UMP from orotate: step 1/2. In terms of biological role, catalyzes the transfer of a ribosyl phosphate group from 5-phosphoribose 1-diphosphate to orotate, leading to the formation of orotidine monophosphate (OMP). The sequence is that of Orotate phosphoribosyltransferase from Salmonella choleraesuis (strain SC-B67).